Reading from the N-terminus, the 357-residue chain is Arginine kinase (357 aa).

At Ala2 the chain carries N-acetylalanine. The region spanning 9–91 is the Phosphagen kinase N-terminal domain; the sequence is KLDEGFKKLE…FDPIIEDYHK (83 aa). An L-arginine-binding site is contributed by 64–68; the sequence is GVGVY. In terms of domain architecture, Phosphagen kinase C-terminal spans 119-356; sequence FVISTRVRCG…LELIKIEKEM (238 aa). Residues 122–126 and His185 each bind ATP; that span reads STRVR. L-arginine is bound at residue Glu225. Arg229 lines the ATP pocket. Residue Cys271 coordinates L-arginine. ATP is bound by residues 280-284 and 309-314; these read RASVH and RGTRGE. Glu314 contributes to the L-arginine binding site.

The protein belongs to the ATP:guanido phosphotransferase family.

It carries out the reaction L-arginine + ATP = N(omega)-phospho-L-arginine + ADP + H(+). The polypeptide is Arginine kinase (Eriocheir sinensis (Chinese mitten crab)).